The primary structure comprises 170 residues: uncharacterized protein (170 aa).

This is an uncharacterized protein from Acidianus bottle-shaped virus (isolate Italy/Pozzuoli) (ABV).